The chain runs to 390 residues: tRNA-specific 2-thiouridylase MnmA (390 aa).

ATP contacts are provided by residues 20–27 and L46; that span reads AMSGGVDS. Residue C114 is the Nucleophile of the active site. C114 and C211 are joined by a disulfide. Position 138 (G138) interacts with ATP. Residues 161–163 are interaction with tRNA; sequence RDQ. The active-site Cysteine persulfide intermediate is the C211.

The protein belongs to the MnmA/TRMU family.

It is found in the cytoplasm. It carries out the reaction S-sulfanyl-L-cysteinyl-[protein] + uridine(34) in tRNA + AH2 + ATP = 2-thiouridine(34) in tRNA + L-cysteinyl-[protein] + A + AMP + diphosphate + H(+). In terms of biological role, catalyzes the 2-thiolation of uridine at the wobble position (U34) of tRNA, leading to the formation of s(2)U34. The protein is tRNA-specific 2-thiouridylase MnmA of Azorhizobium caulinodans (strain ATCC 43989 / DSM 5975 / JCM 20966 / LMG 6465 / NBRC 14845 / NCIMB 13405 / ORS 571).